A 269-amino-acid chain; its full sequence is Senescence-associated protein 13 (269 aa).

21–45 (LVTGGSKGIGEAVVEELAMLGAKVH) provides a ligand contact to NADP(+). Residue S154 coordinates substrate. The Proton acceptor role is filled by Y167.

It belongs to the short-chain dehydrogenases/reductases (SDR) family. SDR65C subfamily.

Unspecific reductase providing both diastereomeric alcohols from the prochiral ketones. Active on cyclic monoterpenes and small flexible lipophilic carbonyls. No activity with tropinone, nitrogen-containing tropinone analogs, tropine or pseudotropine as substrate. The chain is Senescence-associated protein 13 from Arabidopsis thaliana (Mouse-ear cress).